We begin with the raw amino-acid sequence, 450 residues long: Glutamyl-tRNA reductase (450 aa).

Residues 50 to 53 (TCNR), S109, 114 to 116 (EPQ), and Q120 each bind substrate. Residue C51 is the Nucleophile of the active site. 189–194 (GAGEMA) contributes to the NADP(+) binding site. Residues 422–450 (NEPEQPEAHKNRKRPQPDLPAGCPGKTIL) are disordered.

Belongs to the glutamyl-tRNA reductase family. In terms of assembly, homodimer.

It catalyses the reaction (S)-4-amino-5-oxopentanoate + tRNA(Glu) + NADP(+) = L-glutamyl-tRNA(Glu) + NADPH + H(+). The protein operates within porphyrin-containing compound metabolism; protoporphyrin-IX biosynthesis; 5-aminolevulinate from L-glutamyl-tRNA(Glu): step 1/2. Catalyzes the NADPH-dependent reduction of glutamyl-tRNA(Glu) to glutamate 1-semialdehyde (GSA). In Oleidesulfovibrio alaskensis (strain ATCC BAA-1058 / DSM 17464 / G20) (Desulfovibrio alaskensis), this protein is Glutamyl-tRNA reductase.